The following is a 144-amino-acid chain: Large ribosomal subunit protein uL13 (144 aa).

It belongs to the universal ribosomal protein uL13 family. In terms of assembly, part of the 50S ribosomal subunit.

Functionally, this protein is one of the early assembly proteins of the 50S ribosomal subunit, although it is not seen to bind rRNA by itself. It is important during the early stages of 50S assembly. The protein is Large ribosomal subunit protein uL13 of Clostridium botulinum (strain ATCC 19397 / Type A).